A 490-amino-acid chain; its full sequence is ATP synthase subunit beta, chloroplastic (490 aa).

At Thr6 the chain carries Phosphothreonine. Phosphoserine is present on Ser13. Gly172–Thr179 provides a ligand contact to ATP.

Belongs to the ATPase alpha/beta chains family. In terms of assembly, F-type ATPases have 2 components, CF(1) - the catalytic core - and CF(0) - the membrane proton channel. CF(1) has five subunits: alpha(3), beta(3), gamma(1), delta(1), epsilon(1). CF(0) has four main subunits: a(1), b(1), b'(1) and c(9-12).

Its subcellular location is the plastid. The protein resides in the chloroplast thylakoid membrane. It catalyses the reaction ATP + H2O + 4 H(+)(in) = ADP + phosphate + 5 H(+)(out). Functionally, produces ATP from ADP in the presence of a proton gradient across the membrane. The catalytic sites are hosted primarily by the beta subunits. The chain is ATP synthase subunit beta, chloroplastic from Aethionema grandiflorum (Persian stone-cress).